A 517-amino-acid polypeptide reads, in one-letter code: Peptide chain release factor 3 (517 aa).

Positions 9–269 (AKRRTFAIIS…DFVEHAPAPR (261 aa)) constitute a tr-type G domain. GTP contacts are provided by residues 18 to 25 (SHPDAGKT), 86 to 90 (DTPGH), and 140 to 143 (NKLD).

The protein belongs to the TRAFAC class translation factor GTPase superfamily. Classic translation factor GTPase family. PrfC subfamily.

The protein localises to the cytoplasm. Increases the formation of ribosomal termination complexes and stimulates activities of RF-1 and RF-2. It binds guanine nucleotides and has strong preference for UGA stop codons. It may interact directly with the ribosome. The stimulation of RF-1 and RF-2 is significantly reduced by GTP and GDP, but not by GMP. The sequence is that of Peptide chain release factor 3 from Halorhodospira halophila (strain DSM 244 / SL1) (Ectothiorhodospira halophila (strain DSM 244 / SL1)).